Here is a 115-residue protein sequence, read N- to C-terminus: Ig kappa chain V region 3315 (115 aa).

The interval Ala-1 to Cys-24 is framework-1. The complementarity-determining-1 stretch occupies residues Gln-25 to Ser-37. Residues Trp-38–Tyr-52 are framework-2. Residues Arg-53 to Ser-59 form a complementarity-determining-2 region. The tract at residues Gly-60–Cys-91 is framework-3. Residues Leu-92–Thr-104 form a complementarity-determining-3 region. Residues Phe-105 to Lys-114 form a framework-4 region.

The polypeptide is Ig kappa chain V region 3315 (Oryctolagus cuniculus (Rabbit)).